Here is a 136-residue protein sequence, read N- to C-terminus: 1,4-dihydroxy-2-naphthoyl-CoA hydrolase (136 aa).

Residue glutamate 63 is the Nucleophile or proton acceptor of the active site. Residues glycine 82, 89–92 (HVRS), and 106–111 (HLGSRH) contribute to the substrate site.

This sequence belongs to the thioesterase PaaI family. Homotetramer. Dimer of dimers.

It carries out the reaction 1,4-dihydroxy-2-naphthoyl-CoA + H2O = 1,4-dihydroxy-2-naphthoate + CoA + H(+). Its pathway is quinol/quinone metabolism; 1,4-dihydroxy-2-naphthoate biosynthesis; 1,4-dihydroxy-2-naphthoate from chorismate: step 7/7. It functions in the pathway quinol/quinone metabolism; menaquinone biosynthesis. Catalyzes the hydrolysis of 1,4-dihydroxy-2-naphthoyl-CoA (DHNA-CoA) to 1,4-dihydroxy-2-naphthoate (DHNA). Also shows significant activity toward a wide range of acyl-CoA thioesters, and minimal activity toward benzoyl-holoEntB. This Escherichia coli (strain K12) protein is 1,4-dihydroxy-2-naphthoyl-CoA hydrolase.